We begin with the raw amino-acid sequence, 759 residues long: Catalase-peroxidase (759 aa).

The disordered stretch occupies residues 1 to 24; it reads MTQDKCPFKEQPSQPNFAGGGTSN. Positions 96–242 form a cross-link, tryptophyl-tyrosyl-methioninium (Trp-Tyr) (with M-268); that stretch reads WHSAGTYRVF…LAAAHMGLIY (147 aa). His97 serves as the catalytic Proton acceptor. The segment at residues 242–268 is a cross-link (tryptophyl-tyrosyl-methioninium (Tyr-Met) (with W-96)); that stretch reads YVNPEGPDGNPDPIAAAHDIRDTFGRM. His283 provides a ligand contact to heme b.

It belongs to the peroxidase family. Peroxidase/catalase subfamily. In terms of assembly, homodimer or homotetramer. Heme b serves as cofactor. Formation of the three residue Trp-Tyr-Met cross-link is important for the catalase, but not the peroxidase activity of the enzyme.

The protein localises to the cytoplasm. It carries out the reaction H2O2 + AH2 = A + 2 H2O. The enzyme catalyses 2 H2O2 = O2 + 2 H2O. Its function is as follows. Bifunctional enzyme with both catalase and broad-spectrum peroxidase activity. The protein is Catalase-peroxidase of Neosartorya fischeri (strain ATCC 1020 / DSM 3700 / CBS 544.65 / FGSC A1164 / JCM 1740 / NRRL 181 / WB 181) (Aspergillus fischerianus).